The chain runs to 422 residues: L-2-hydroxyglutarate dehydrogenase (422 aa).

Belongs to the L2HGDH family. Requires FAD as cofactor.

It is found in the cell inner membrane. It carries out the reaction (S)-2-hydroxyglutarate + a quinone = a quinol + 2-oxoglutarate. It functions in the pathway amino-acid degradation. In terms of biological role, catalyzes the dehydrogenation of L-2-hydroxyglutarate (L2HG) to alpha-ketoglutarate and couples to the respiratory chain by feeding electrons from the reaction into the membrane quinone pool. Functions in a L-lysine degradation pathway that proceeds via cadaverine, glutarate and L-2-hydroxyglutarate. This is L-2-hydroxyglutarate dehydrogenase from Escherichia coli (strain K12).